A 96-amino-acid polypeptide reads, in one-letter code: Co-chaperonin GroES (96 aa).

Belongs to the GroES chaperonin family. Heptamer of 7 subunits arranged in a ring. Interacts with the chaperonin GroEL.

It is found in the cytoplasm. Together with the chaperonin GroEL, plays an essential role in assisting protein folding. The GroEL-GroES system forms a nano-cage that allows encapsulation of the non-native substrate proteins and provides a physical environment optimized to promote and accelerate protein folding. GroES binds to the apical surface of the GroEL ring, thereby capping the opening of the GroEL channel. This Herminiimonas arsenicoxydans protein is Co-chaperonin GroES.